The primary structure comprises 365 residues: G-protein coupled receptor 68 (365 aa).

Topologically, residues 1-12 (MGNITTENSSLS) are extracellular. 2 N-linked (GlcNAc...) asparagine glycosylation sites follow: Asn3 and Asn8. A helical membrane pass occupies residues 13-49 (CPIDHTIHQTLAPVVYVTVLVVGFPANCLSLYFGYLQ). Cystine bridges form between Cys13–Cys258 and Cys94–Cys172. Topologically, residues 50–53 (IKAR) are cytoplasmic. Residues 54-84 (NELGVYLCNLTIADLFYICSLPFWLQYVLQH) traverse the membrane as a helical segment. Residues 85-89 (DDWSH) are Extracellular-facing. The helical transmembrane segment at 90-125 (GDLSCQVCGILLYENIYISVGFLCCISIDRYLAVAH) threads the bilayer. Residues 126-133 (PFRFHQFR) are Cytoplasmic-facing. A helical transmembrane segment spans residues 134–160 (TLKAAVGVSVLIWAKELLTSIYFLNHK). At 161–176 (EVIEDEDQHRVCFEHY) the chain is on the extracellular side. The tract at residues 161 to 176 (EVIEDEDQHRVCFEHY) is extracellular loop 2 (ECL2). The helical transmembrane segment at 177-214 (PIQAWQRSINYYRFLVGFLFPICLLLASYQGILRAVRR) threads the bilayer. The Cytoplasmic segment spans residues 215–218 (SHGT). Residues 219–254 (QKSRKDQIQRLVLSTVVIFLACFLPYHVLLLVRSLW) traverse the membrane as a helical segment. The Extracellular segment spans residues 255–260 (ERNCEF). The chain crosses the membrane as a helical span at residues 261–289 (AKSIFNVYHFSLLLTSFNCVADPVLYCFV). Residues 290–365 (SETTHRDLAR…VGGPSTVGLA (76 aa)) lie on the Cytoplasmic side of the membrane.

This sequence belongs to the G-protein coupled receptor 1 family. In terms of tissue distribution, expressed in the lung, testis, heart, brain, spleen, thymus, brown fat, small intestine, colon, peripheral blood leukocytes, macrophages, stomach, ovary and white fat but not in the liver, kidney, and skeletal muscle. Expression in the prostate is weak but detectable. Specifically expressed in endothelial cells of small-diameter resistance arteries.

Its subcellular location is the cell membrane. Its activity is regulated as follows. Activated by a network of residues that connects an extracellular-facing cavity to Glu-149, a conserved charged residue buried in the transmembrane core of the receptor. Protonation likely drives conformational changes in extracellular loop 2 (ECL2), which stabilizes movement of transmembrane 3 (TM3) and a series of rearrangements that connect the extracellular-facing cavity to Glu-149, a residue only conserved in proton-sensing G-protein coupled receptors. Activated in an allosteric manner by divalent metal ions at the extracellular surface following the order: Cd(2+) &gt; Co(2+) &gt; Ni(2+) &gt; Zn(2+) &gt; Fe(2+) &gt; Ca(2+) &gt; Mg(2+). Activated by ogerin (ZINC67740571), a selective GPR68 positive allosteric modulator. Inhibited by small molecule GPR68-I, decreasing inflammation in models of colitis. Its function is as follows. Proton-sensing G-protein coupled receptor activated by extracellular pH, which is required to monitor pH changes and generate adaptive reactions. The receptor is almost silent at pH 7.8 but fully activated at pH 6.8. Ligand binding causes a conformation change that triggers signaling via guanine nucleotide-binding proteins (G proteins) and modulates the activity of downstream effectors, such as phospholipase C. GPR68 is mainly coupled to G(q) G proteins and mediates production of diacylglycerol (DAG) and inositol 1,4,5-trisphosphate (IP3). Acts as a key mechanosensor of fluid shear stress and membrane stretch. Expressed in endothelial cells of small-diameter resistance arteries, where it mediates flow-induced dilation in response to shear stress. May represents an osteoblastic pH sensor regulating cell-mediated responses to acidosis in bone. Acts as a regulator of calcium-sensing receptor CASR in a seesaw manner: GPR68-mediated signaling inhibits CASR signaling in response to protons, while CASR inhibits GPR68 in presence of extracellular calcium. Also functions as a metastasis suppressor gene in prostate cancer. This chain is G-protein coupled receptor 68, found in Mus musculus (Mouse).